The chain runs to 521 residues: uncharacterized protein (521 aa).

Residues 14-41 are a coiled coil; sequence QFQQMQHQMQQQQQQQMQQQQQQQQQQQ. 3 stretches are compositionally biased toward low complexity: residues 238–266, 275–353, and 423–482; these read LSGS…TSSS, SSTS…NNNN, and PRLS…PNNP. 2 disordered regions span residues 238 to 357 and 413 to 491; these read LSGS…ISGF and TAVA…SNNG.

This is an uncharacterized protein from Dictyostelium discoideum (Social amoeba).